Reading from the N-terminus, the 358-residue chain is Nuclear receptor subfamily 1 group I member 3 (358 aa).

Positions 18 to 93 (PRNCVVCGDR…VGMRKDMILS (76 aa)) form a DNA-binding region, nuclear receptor. The NR C4-type zinc finger occupies 21 to 41 (CVVCGDRATGYHFHALTCEGC). Residue Thr48 is modified to Phosphothreonine; by PKC. The NR C4-type zinc-finger motif lies at 57–81 (CPFAGRCEVSKAQRRHCPACRLQKC). The NR LBD domain maps to 119–358 (QQKELIQTLL…MMPLLGEICS (240 aa)).

Belongs to the nuclear hormone receptor family. NR1 subfamily. In terms of assembly, heterodimer of NR1I3 and RXR. Interacts with PSMC4. Interacts with ECT2. Directly interacts with DNAJC7; this complex may also include HSP90. Interacts with CRY1. Interacts with CRY2 in a ligand-dependent manner. In terms of processing, phosphorylated at Thr-48 by PKC, dephosphorylation of Thr-48 is required for nuclear translocation and activation.

It localises to the nucleus. Its subcellular location is the cytoplasm. It is found in the cytoskeleton. In terms of biological role, binds and transactivates the retinoic acid response elements that control expression of the retinoic acid receptor beta 2 and alcohol dehydrogenase 3 genes. Transactivates both the phenobarbital responsive element module of the human CYP2B6 gene and the CYP3A4 xenobiotic response element. The protein is Nuclear receptor subfamily 1 group I member 3 (Nr1i3) of Rattus norvegicus (Rat).